Reading from the N-terminus, the 203-residue chain is Small ribosomal subunit protein uS4 (203 aa).

The S4 RNA-binding domain occupies 93–173 (RRFDNVVFRA…IPSWIQVDKA (81 aa)).

The protein belongs to the universal ribosomal protein uS4 family. As to quaternary structure, part of the 30S ribosomal subunit. Contacts protein S5. The interaction surface between S4 and S5 is involved in control of translational fidelity.

One of the primary rRNA binding proteins, it binds directly to 16S rRNA where it nucleates assembly of the body of the 30S subunit. Its function is as follows. With S5 and S12 plays an important role in translational accuracy. This chain is Small ribosomal subunit protein uS4, found in Pelodictyon phaeoclathratiforme (strain DSM 5477 / BU-1).